A 327-amino-acid chain; its full sequence is Transcription factor bHLH48 (327 aa).

The tract at residues 137 to 179 (EPAETDSMVENQNQSYSSGKRKEREKKVKSSTKKNKSSVESDK) is disordered. The bHLH domain occupies 191-241 (QATDNHSLAERARREKINARMKLLQELVPGCDKIQGTALVLDEIINHVQTL).

In terms of assembly, homodimer. Expressed in leaves, stems, and flowers.

The protein resides in the nucleus. The sequence is that of Transcription factor bHLH48 (BHLH48) from Arabidopsis thaliana (Mouse-ear cress).